Consider the following 312-residue polypeptide: tRNA pseudouridine synthase B (312 aa).

The Nucleophile role is filled by aspartate 48.

This sequence belongs to the pseudouridine synthase TruB family. Type 1 subfamily.

It catalyses the reaction uridine(55) in tRNA = pseudouridine(55) in tRNA. In terms of biological role, responsible for synthesis of pseudouridine from uracil-55 in the psi GC loop of transfer RNAs. The protein is tRNA pseudouridine synthase B of Haemophilus influenzae (strain ATCC 51907 / DSM 11121 / KW20 / Rd).